The chain runs to 239 residues: Probable transcriptional regulatory protein EF_2866 (239 aa).

It belongs to the TACO1 family. YeeN subfamily.

Its subcellular location is the cytoplasm. The protein is Probable transcriptional regulatory protein EF_2866 of Enterococcus faecalis (strain ATCC 700802 / V583).